The following is a 540-amino-acid chain: CTP synthase (540 aa).

Positions 1–266 (MAVKYIFVTG…LTPIARHLEL (266 aa)) are amidoligase domain. CTP is bound at residue serine 14. Serine 14 serves as a coordination point for UTP. ATP is bound by residues 15 to 20 (SLGKGI) and aspartate 72. Positions 72 and 140 each coordinate Mg(2+). Residues 147–149 (DIE), 187–192 (KTKPTQ), and lysine 223 each bind CTP. Residues 187-192 (KTKPTQ) and lysine 223 contribute to the UTP site. The region spanning 291–540 (TIGFVGKYLS…VKETLAHKKT (250 aa)) is the Glutamine amidotransferase type-1 domain. Glycine 351 is an L-glutamine binding site. Cysteine 378 serves as the catalytic Nucleophile; for glutamine hydrolysis. L-glutamine-binding positions include 379–382 (LGMQ), glutamate 402, and arginine 470. Active-site residues include histidine 513 and glutamate 515.

This sequence belongs to the CTP synthase family. Homotetramer.

The catalysed reaction is UTP + L-glutamine + ATP + H2O = CTP + L-glutamate + ADP + phosphate + 2 H(+). The enzyme catalyses L-glutamine + H2O = L-glutamate + NH4(+). It catalyses the reaction UTP + NH4(+) + ATP = CTP + ADP + phosphate + 2 H(+). It functions in the pathway pyrimidine metabolism; CTP biosynthesis via de novo pathway; CTP from UDP: step 2/2. With respect to regulation, allosterically activated by GTP, when glutamine is the substrate; GTP has no effect on the reaction when ammonia is the substrate. The allosteric effector GTP functions by stabilizing the protein conformation that binds the tetrahedral intermediate(s) formed during glutamine hydrolysis. Inhibited by the product CTP, via allosteric rather than competitive inhibition. In terms of biological role, catalyzes the ATP-dependent amination of UTP to CTP with either L-glutamine or ammonia as the source of nitrogen. Regulates intracellular CTP levels through interactions with the four ribonucleotide triphosphates. The sequence is that of CTP synthase from Helicobacter hepaticus (strain ATCC 51449 / 3B1).